The sequence spans 346 residues: PPE family protein PPE17 (346 aa).

Positions 6–159 are PPE; it reads FPPEFNSLNI…LYATMAAAAA (154 aa).

Belongs to the mycobacterial PPE family. In terms of assembly, interacts with LRR motifs 15-20 of host Toll-like receptor 2 (TLR2).

Its subcellular location is the secreted. The protein resides in the cell wall. It is found in the cell surface. Induces pro-inflammatory responses. Induces host TLR1/2 heterodimerization, which causes an increased recruitment of IRAK1, MYD88, and protein kinase C epsilon (PRKCE) to the downstream TLR-signaling complex that translocates PRKCE into the nucleus in an IRAK1-dependent manner. PRKCE-mediated phosphorylation allowed the nuclear IRAK3 to be exported to the cytoplasm, leading to increased activation of ERK1/2, stabilization of MAPK phosphatase 1 (MKP1), and induction of TNF-alpha with concomitant down-regulation of MAP kinase p38. In terms of biological role, during M.tuberculosis and HIV-1 co-infection, can stimulate transcription from the long terminal repeat (LTR) of HIV-1 in monocyte/macrophage cells. Interaction with human TLR2 activates the NF-kappa-B transcription factor, which binds to the promoter region of the HIV-1 and induces HIV-1 gene expression. The protein is PPE family protein PPE17 (PPE17) of Mycobacterium tuberculosis (strain ATCC 25618 / H37Rv).